The primary structure comprises 1860 residues: Proprotein convertase subtilisin/kexin type 5 (1860 aa).

The N-terminal stretch at 1-32 (MGWGSRCCCPGRLDLLCVLALLGGCLLPVCRT) is a signal peptide. Positions 33–114 (RVYTNHWAVK…QQVVKKRTKR (82 aa)) are excised as a propeptide. The Extracellular segment spans residues 115–1743 (DYDFSRAQST…VRPATEHFKT (1629 aa)). Residues 134 to 453 (MWYMHCSDNT…FGLMDAEAMV (320 aa)) form the Peptidase S8 domain. Residues aspartate 171 and histidine 212 each act as charge relay system in the active site. N-linked (GlcNAc...) asparagine glycans are attached at residues asparagine 225 and asparagine 381. The active-site Charge relay system is serine 386. One can recognise a P/Homo B domain in the interval 461–601 (TVPRQHVCVE…SLVLYGTSVQ (141 aa)). Residues 519–521 (RGD) carry the Cell attachment site motif. FU repeat units follow at residues 630 to 680 (EDYA…GHYH), 683 to 730 (KKRC…GSYQ), 734 to 777 (KNLC…GRYF), 779 to 824 (GQDC…SYYF), 832 to 879 (YKSC…GEYV), 882 to 927 (HGHC…WKFE), 929 to 979 (ENQC…GHYA), 982 to 1028 (GNTC…GEVQ), 1032 to 1077 (YEEC…KTYS), 1079 to 1121 (EVEC…GFYG), 1125 to 1168 (MGEC…KTQE), 1177 to 1221 (LRKL…GTWP), 1225 to 1272 (SGSC…GSYA), 1274 to 1318 (DGIC…RHVA), 1320 to 1363 (KGVC…GFYA), 1365 to 1411 (SRHC…GTYY), 1415 to 1461 (TKEC…SEYW), 1465 to 1510 (APGC…GYYA), 1514 to 1559 (SNRC…GYYA), 1563 to 1610 (TGRC…HYYV), 1614 to 1659 (TQTC…GEYR), and 1665 to 1712 (KFNC…SDPP). Positions 636-1727 (CDPECSEVGC…CDCQDTTDEC (1092 aa)) are CRM (Cys-rich motif). Asparagine 665 is a glycosylation site (N-linked (GlcNAc...) asparagine). N-linked (GlcNAc...) asparagine glycans are attached at residues asparagine 752, asparagine 802, and asparagine 852. In terms of domain architecture, PLAC spans 869–913 (MGAICKDGEYVDEHGHCQTCEASCAKCQGPTQEDCTTCPMTRIFD). N-linked (GlcNAc...) asparagine glycosylation is present at asparagine 1014. N-linked (GlcNAc...) asparagine glycosylation occurs at asparagine 1191. N-linked (GlcNAc...) asparagine glycosylation is present at asparagine 1290. Asparagine 1497 carries N-linked (GlcNAc...) asparagine glycosylation. Asparagine 1685 and asparagine 1707 each carry an N-linked (GlcNAc...) asparagine glycan. A helical membrane pass occupies residues 1744–1764 (ALFITSSMMLVLLLGAAVVVW). Residues 1765–1860 (KKSRGRVQPA…YDDESYSYYQ (96 aa)) are Cytoplasmic-facing. AC stretches follow at residues 1807 to 1826 (VIEYRDRDYDEDDDDDIVYM) and 1838 to 1860 (YGLLDDDDIDELEYDDESYSYYQ).

This sequence belongs to the peptidase S8 family. In terms of tissue distribution, expressed in T-lymphocytes.

It is found in the secreted. It localises to the endomembrane system. In terms of biological role, serine endoprotease that processes various proproteins by cleavage at paired basic amino acids, recognizing the RXXX[KR]R consensus motif. Likely functions in the constitutive and regulated secretory pathways. Plays an essential role in pregnancy establishment by proteolytic activation of a number of important factors such as BMP2, CALD1 and alpha-integrins. The polypeptide is Proprotein convertase subtilisin/kexin type 5 (PCSK5) (Homo sapiens (Human)).